Here is a 439-residue protein sequence, read N- to C-terminus: Serine hydroxymethyltransferase (439 aa).

126-128 (AHV) contributes to the (6S)-5,6,7,8-tetrahydrofolate binding site. Lysine 232 is modified (N6-(pyridoxal phosphate)lysine).

It belongs to the SHMT family. Homodimer. Pyridoxal 5'-phosphate serves as cofactor.

Its subcellular location is the cytoplasm. The protein operates within amino-acid biosynthesis; glycine biosynthesis; glycine from L-serine: step 1/1. Catalyzes the reversible interconversion of serine and glycine with a modified folate serving as the one-carbon carrier. Also exhibits a pteridine-independent aldolase activity toward beta-hydroxyamino acids, producing glycine and aldehydes, via a retro-aldol mechanism. In Staphylothermus marinus (strain ATCC 43588 / DSM 3639 / JCM 9404 / F1), this protein is Serine hydroxymethyltransferase.